The chain runs to 270 residues: uncharacterized protein (270 aa).

The protein belongs to the GSP E family.

This is an uncharacterized protein from Methanocaldococcus jannaschii (strain ATCC 43067 / DSM 2661 / JAL-1 / JCM 10045 / NBRC 100440) (Methanococcus jannaschii).